The chain runs to 737 residues: Polyribonucleotide nucleotidyltransferase (737 aa).

Mg(2+)-binding residues include Asp514 and Asp520. The region spanning 580 to 639 (PRIITVKIPVDKIGEVIGPKGKMINQIQEDTGADITIEDDGTIYIGAQAGSQAEAARATI) is the KH domain. The S1 motif domain maps to 651 to 723 (GERYLGTVVK…SRGKLSLIPV (73 aa)).

It belongs to the polyribonucleotide nucleotidyltransferase family. It depends on Mg(2+) as a cofactor.

It localises to the cytoplasm. It catalyses the reaction RNA(n+1) + phosphate = RNA(n) + a ribonucleoside 5'-diphosphate. In terms of biological role, involved in mRNA degradation. Catalyzes the phosphorolysis of single-stranded polyribonucleotides processively in the 3'- to 5'-direction. The chain is Polyribonucleotide nucleotidyltransferase from Streptomyces griseus subsp. griseus (strain JCM 4626 / CBS 651.72 / NBRC 13350 / KCC S-0626 / ISP 5235).